Consider the following 522-residue polypeptide: MWVEILVGSSAAIISGAAGYLLSKKIEKDKLKIYEEQARAKAKAIEHEAEKILQNAQVQVKEAELELKRDFEKKLEELKRDYEERFNELMEKEMSLKQMFKDELKHITLEKQEIKAEREEINRLKNEYEELKKRYQEKYQEVLEALQQQAGLTLEEAKNLILQKAEEESRLEIANIVRKYEEEAKREAKRRANYIIAQATTRFAGEFAAERLINTVSIPSEDIKGRIIGKEGRNIKTLEMLLGVDIIIDDTPNAIILSSFNLYRRAIATKVIELLVEDGRIQPSRIEEIYEKVKEEFDQQLLEEGENIVIDLGIGLIHPEIVKLIGRLKFRASYGQNALGHSLEVAHLAGIMAAEMGGDEVMAKRAGLLHDIGKALTHEYSGSHVDLGAEICKRYKEPDVVINAIYAHHGHEEPRSIEAAAVCAADTLSAARPGARREVLEAFLKRVQAIEEIALSKPGVKKAYAINAGREVRVIVNADLVNDNEAVLLAKEIAKDIETGVQYPGEIKVNVIRENRAIEYAR.

A helical transmembrane segment spans residues 2-22 (WVEILVGSSAAIISGAAGYLL). A KH domain is found at 212 to 278 (LINTVSIPSE…TKVIELLVED (67 aa)). The HD domain maps to 338-431 (ALGHSLEVAH…VCAADTLSAA (94 aa)).

Belongs to the RNase Y family.

Its subcellular location is the cell membrane. Endoribonuclease that initiates mRNA decay. In Nitratiruptor sp. (strain SB155-2), this protein is Ribonuclease Y.